The chain runs to 187 residues: Protein GrpE (187 aa).

The tract at residues 1-23 (MNNEKELKKEETSVENKEKKVAT) is disordered.

Belongs to the GrpE family. As to quaternary structure, homodimer.

It is found in the cytoplasm. Functionally, participates actively in the response to hyperosmotic and heat shock by preventing the aggregation of stress-denatured proteins, in association with DnaK and GrpE. It is the nucleotide exchange factor for DnaK and may function as a thermosensor. Unfolded proteins bind initially to DnaJ; upon interaction with the DnaJ-bound protein, DnaK hydrolyzes its bound ATP, resulting in the formation of a stable complex. GrpE releases ADP from DnaK; ATP binding to DnaK triggers the release of the substrate protein, thus completing the reaction cycle. Several rounds of ATP-dependent interactions between DnaJ, DnaK and GrpE are required for fully efficient folding. This is Protein GrpE from Mesoplasma florum (strain ATCC 33453 / NBRC 100688 / NCTC 11704 / L1) (Acholeplasma florum).